The sequence spans 278 residues: Probable ribosomal RNA small subunit methyltransferase A (278 aa).

Residues histidine 25, methionine 27, glycine 52, glutamate 73, aspartate 98, and asparagine 114 each coordinate S-adenosyl-L-methionine.

This sequence belongs to the class I-like SAM-binding methyltransferase superfamily. rRNA adenine N(6)-methyltransferase family. RsmA subfamily.

It localises to the cytoplasm. Its function is as follows. Specifically dimethylates two adjacent adenosines in the loop of a conserved hairpin near the 3'-end of 16S rRNA in the 30S particle. May play a critical role in biogenesis of 30S subunits. The chain is Probable ribosomal RNA small subunit methyltransferase A from Methanopyrus kandleri (strain AV19 / DSM 6324 / JCM 9639 / NBRC 100938).